The chain runs to 52 residues: Disintegrin multisquamatin (52 aa).

The region spanning 1-50 is the Disintegrin domain; the sequence is EGEECESGPCCRNCKFLKEGTICKRARGDDMDDYCNGKTCDCPRNPHKGP. Disulfide bonds link cysteine 5–cysteine 14, cysteine 10–cysteine 35, cysteine 11–cysteine 40, and cysteine 23–cysteine 42. The Cell attachment site motif lies at 27 to 29; it reads RGD.

It belongs to the venom metalloproteinase (M12B) family. P-II subfamily. P-IIa sub-subfamily. Monomer. In terms of tissue distribution, expressed by the venom gland.

The protein resides in the secreted. Functionally, inhibits ADP-induced human, canine and rabbit platelet aggregation by binding with high affinity to alpha-IIb/beta-3 (ITGA2B/ITGB3). This chain is Disintegrin multisquamatin, found in Echis multisquamatus (Central Asian sand viper).